Here is a 1179-residue protein sequence, read N- to C-terminus: Integrin alpha-7 (1179 aa).

The signal sequence occupies residues 1-33; the sequence is MARIPRCDFLRPPGIYYLITSLLAGLFLPPAIA. The Extracellular segment spans residues 34-1076; that stretch reads FNLDVMGAIR…YLDPMAVVVE (1043 aa). FG-GAP repeat units lie at residues 38 to 103, 110 to 175, 185 to 238, 292 to 349, 350 to 411, 412 to 467, and 471 to 530; these read VMGA…ETDC, RGAN…IRDE, EGRP…SPDL, DRLT…ATRL, IPEV…HWAD, ISPL…GVVV, and QVLE…IDPR. N-linked (GlcNAc...) asparagine glycosylation occurs at Asn86. 3 disulfides stabilise this stretch: Cys94/Cys103, Cys140/Cys163, and Cys184/Cys197. 13 residues coordinate Ca(2+): Asp372, Asn374, Asp376, Asp380, Asp434, Asn436, Asp438, Asp442, Asp492, Asp494, Asn496, Tyr498, and Asp500. 6 disulfides stabilise this stretch: Cys539-Cys546, Cys552-Cys615, Cys681-Cys687, Cys781-Cys792, Cys939-Cys993, and Cys999-Cys1004. An N-linked (GlcNAc...) asparagine glycan is attached at Asn784. Residues 952–961 are compositionally biased toward basic and acidic residues; it reads SRDRRRRELG. Residues 952–978 are disordered; it reads SRDRRRRELGQPEPQEPPEKVEPSTSW. Asn988 is a glycosylation site (N-linked (GlcNAc...) asparagine). N-linked (GlcNAc...) asparagine glycosylation is found at Asn1023 and Asn1043. A helical membrane pass occupies residues 1077 to 1102; sequence GVPWWVILLGVLAGLLVLALLVLLLW. At 1103-1179 the chain is on the cytoplasmic side; sequence KLGFFKRAKH…PDGHPVPATA (77 aa). The GFFKR motif signature appears at 1105 to 1109; that stretch reads GFFKR. The interval 1134–1153 is disordered; it reads KEEKTGTIQRSNWGNSQWEG. The segment covering 1139–1152 has biased composition (polar residues); sequence GTIQRSNWGNSQWE. Tandem repeats lie at residues 1155–1158, 1163–1166, and 1171–1174. The 3 X 4 AA repeats of D-X-H-P stretch occupies residues 1155–1174; that stretch reads DAHPILAADWHPELGPDGHP.

It belongs to the integrin alpha chain family. In terms of assembly, heterodimer of an alpha and a beta subunit. The alpha subunit is composed of a heavy and a light chain linked by a disulfide bond. Alpha-7 associates with beta-1. Interacts with COMP. Interacts (via C-terminus intracellular tail region) with CIB1; the interaction is stabilized/increased in a calcium- and magnesium-dependent manner. Post-translationally, ADP-ribosylated on at least two sites of the extracellular domain in skeletal myotubes (in vitro). No proteolytic cleavage to produce the 70 kDa form is seen due to the presence of a Gly instead of an arginine residue at position 647. In terms of tissue distribution, isoforms containing segment X2 are found in adult heart, lung and skeletal muscle. Isoforms containing segment X1 are expressed in adult heart, lung and in proliferating skeletal myoblasts but not in adult skeletal muscle. Isoforms containing segment a are exclusively found in skeletal muscle. Isoforms containing segment B are widely expressed. In muscle fibers isoforms containing segment A and B are expressed at myotendinous and neuromuscular junctions; isoforms containing segment C are expressed at neuromuscular junctions and at extrasynaptic sites.

It localises to the membrane. Integrin alpha-7/beta-1 is the primary laminin receptor on skeletal myoblasts and adult myofibers. During myogenic differentiation, it may induce changes in the shape and mobility of myoblasts, and facilitate their localization at laminin-rich sites of secondary fiber formation. Involved in the maintenance of the myofibers cytoarchitecture as well as for their anchorage, viability and functional integrity. Mice carrying a ITGA7 null allele are viable and fertile, but show progressive muscular dystrophy starting soon after birth, but with a distinct variability in different muscle types. Required to promote contractile phenotype acquisition in differentiated airway smooth muscle (ASM) cells. Acts as a Schwann cell receptor for laminin-2. Acts as a receptor of COMP and mediates its effect on vascular smooth muscle cells (VSMCs) maturation. This is Integrin alpha-7 (Itga7) from Mus musculus (Mouse).